The following is a 141-amino-acid chain: Vesicle-associated membrane protein 4 (141 aa).

Residues 1–51 (MPPKFKRHLNDDDVTGSVKSERRNLLEDDSDEEEDFFLRGPSGPRFGPRND) form a disordered region. The Cytoplasmic segment spans residues 1–115 (MPPKFKRHLN…RRQMWWRGCK (115 aa)). Ser17 and Ser30 each carry phosphoserine. The region spanning 52–112 (KIKHVQNQVD…KQLRRQMWWR (61 aa)) is the v-SNARE coiled-coil homology domain. The helical; Anchor for type IV membrane protein transmembrane segment at 116–136 (IKAIMALVAVILLLVIIILIV) threads the bilayer. The Vesicular segment spans residues 137 to 141 (VKYRT).

Belongs to the synaptobrevin family. As to quaternary structure, identified in a complex containing STX6, STX12, VAMP4 and VTI1A. Interacts with BAIAP3; this interaction is increased in the presence of calcium.

It is found in the golgi apparatus. The protein localises to the trans-Golgi network membrane. Its function is as follows. Involved in the pathway that functions to remove an inhibitor (probably synaptotagmin-4) of calcium-triggered exocytosis during the maturation of secretory granules. May be a marker for this sorting pathway that is critical for remodeling the secretory response of granule. The chain is Vesicle-associated membrane protein 4 (VAMP4) from Bos taurus (Bovine).